The primary structure comprises 202 residues: Large ribosomal subunit protein uL13 (202 aa).

The protein belongs to the universal ribosomal protein uL13 family. Component of the large ribosomal subunit (LSU). Mature N.crassa ribosomes consist of a small (40S) and a large (60S) subunit. The 40S small subunit contains 1 molecule of ribosomal RNA (18S rRNA) and at least 32 different proteins. The large 60S subunit contains 3 rRNA molecules (26S, 5.8S and 5S rRNA) and at least 42 different proteins.

It localises to the cytoplasm. Functionally, component of the ribosome, a large ribonucleoprotein complex responsible for the synthesis of proteins in the cell. The small ribosomal subunit (SSU) binds messenger RNAs (mRNAs) and translates the encoded message by selecting cognate aminoacyl-transfer RNA (tRNA) molecules. The large subunit (LSU) contains the ribosomal catalytic site termed the peptidyl transferase center (PTC), which catalyzes the formation of peptide bonds, thereby polymerizing the amino acids delivered by tRNAs into a polypeptide chain. The nascent polypeptides leave the ribosome through a tunnel in the LSU and interact with protein factors that function in enzymatic processing, targeting, and the membrane insertion of nascent chains at the exit of the ribosomal tunnel. This chain is Large ribosomal subunit protein uL13 (crp-46), found in Neurospora crassa (strain ATCC 24698 / 74-OR23-1A / CBS 708.71 / DSM 1257 / FGSC 987).